A 572-amino-acid chain; its full sequence is Proline--tRNA ligase (572 aa).

It belongs to the class-II aminoacyl-tRNA synthetase family. ProS type 1 subfamily. In terms of assembly, homodimer.

The protein localises to the cytoplasm. The catalysed reaction is tRNA(Pro) + L-proline + ATP = L-prolyl-tRNA(Pro) + AMP + diphosphate. Catalyzes the attachment of proline to tRNA(Pro) in a two-step reaction: proline is first activated by ATP to form Pro-AMP and then transferred to the acceptor end of tRNA(Pro). As ProRS can inadvertently accommodate and process non-cognate amino acids such as alanine and cysteine, to avoid such errors it has two additional distinct editing activities against alanine. One activity is designated as 'pretransfer' editing and involves the tRNA(Pro)-independent hydrolysis of activated Ala-AMP. The other activity is designated 'posttransfer' editing and involves deacylation of mischarged Ala-tRNA(Pro). The misacylated Cys-tRNA(Pro) is not edited by ProRS. The protein is Proline--tRNA ligase of Pectobacterium atrosepticum (strain SCRI 1043 / ATCC BAA-672) (Erwinia carotovora subsp. atroseptica).